The chain runs to 121 residues: Protein CHLORORESPIRATORY REDUCTION 42, chloroplastic (121 aa).

Biogenesis factor component of the plastidial NDH subcomplex A.

It localises to the plastid. Its subcellular location is the chloroplast. It is found in the chloroplast stroma. Functionally, required for both formation and activity of the chloroplast NAD(P)H dehydrogenase (NDH) complex of the photosynthetic electron transport chain. Functions in assembly or stabilization of the NDH complex; probably involved, together with CRR1 and CRR6, in the incorporation of NdhJ, NdhM, NdhK and NdhI into the NDH subcomplex A assembly intermediate (NAI500) to produce the complex NAI400. The chain is Protein CHLORORESPIRATORY REDUCTION 42, chloroplastic from Arabidopsis thaliana (Mouse-ear cress).